The sequence spans 84 residues: Large ribosomal subunit protein bL27 (84 aa).

Residues 1 to 22 (MAHKKAGGSTRNGRDSESKRLG) form a disordered region.

It belongs to the bacterial ribosomal protein bL27 family.

The sequence is that of Large ribosomal subunit protein bL27 from Shewanella woodyi (strain ATCC 51908 / MS32).